The primary structure comprises 430 residues: MKQRIKTRHMILGVMCLMYFIAYIDRVNISVAAPLIREEMGLTTSQLGLVFSAFAYPYAAMQILGGWMADKFGPKKVLIVLSLIWGVATVLTGFAGSVLILVVLRFVLGIGEGGAFPTATRAFTYWMPVAERGFAQGITHSFARLGGAITPPVVLVIVAAAGWREAFIVLGAVSLGWTLLYAFFFKDSPDKHSRVTAQELQEIGYRHGDSRQAAKAATPWRRLFRRMWLVTFVDFCYGWSLWVYLTWLPSYLKEARGFDLKQLALFTALPLMAGVVGDTLGGVLSDRIYKRTGNLRLARGAVLFVGLAGSLMFIAPMTFTADAVNAVILLSLSFFFLELTNAVLWSLPLDIAGKYAGTAGGMMNTGFGVAGMVSPVVFGYLIERTGSYDLPFMISGALLGVGALASLFINPLLTVDSPDEKAGEVRHALP.

The next 10 helical transmembrane spans lie at 47–67, 83–103, 142–162, 165–185, 228–248, 263–283, 301–321, 327–347, 362–382, and 390–410; these read LGLVFSAFAYPYAAMQILGGW, LIWGVATVLTGFAGSVLILVV, FARLGGAITPPVVLVIVAAAG, EAFIVLGAVSLGWTLLYAFFF, WLVTFVDFCYGWSLWVYLTWL, LALFTALPLMAGVVGDTLGGV, AVLFVGLAGSLMFIAPMTFTA, VILLSLSFFFLELTNAVLWSL, MMNTGFGVAGMVSPVVFGYLI, and LPFMISGALLGVGALASLFIN.

Belongs to the major facilitator superfamily.

Its subcellular location is the cell membrane. In terms of biological role, may transport sulfoacetate into the cell. This is Probable sulfoacetate transporter SauU (sauU) from Cupriavidus necator (strain ATCC 17699 / DSM 428 / KCTC 22496 / NCIMB 10442 / H16 / Stanier 337) (Ralstonia eutropha).